Reading from the N-terminus, the 64-residue chain is Small ribosomal subunit protein eS17 (64 aa).

This sequence belongs to the eukaryotic ribosomal protein eS17 family.

This Methanococcoides burtonii (strain DSM 6242 / NBRC 107633 / OCM 468 / ACE-M) protein is Small ribosomal subunit protein eS17.